We begin with the raw amino-acid sequence, 296 residues long: Glycine--tRNA ligase alpha subunit (296 aa).

This sequence belongs to the class-II aminoacyl-tRNA synthetase family. As to quaternary structure, tetramer of two alpha and two beta subunits.

The protein resides in the cytoplasm. It catalyses the reaction tRNA(Gly) + glycine + ATP = glycyl-tRNA(Gly) + AMP + diphosphate. This Synechococcus sp. (strain CC9605) protein is Glycine--tRNA ligase alpha subunit.